The following is a 130-amino-acid chain: Small ribosomal subunit protein uS11 (130 aa).

The protein belongs to the universal ribosomal protein uS11 family. Part of the 30S ribosomal subunit. Interacts with proteins S7 and S18. Binds to IF-3.

Its function is as follows. Located on the platform of the 30S subunit, it bridges several disparate RNA helices of the 16S rRNA. Forms part of the Shine-Dalgarno cleft in the 70S ribosome. The protein is Small ribosomal subunit protein uS11 of Xylella fastidiosa (strain 9a5c).